The primary structure comprises 345 residues: D-erythrose-4-phosphate dehydrogenase (345 aa).

11–12 (RI) serves as a coordination point for NAD(+). Substrate is bound by residues 158–160 (SCT), R204, 217–218 (TK), and R240. The Nucleophile role is filled by C159. N322 contributes to the NAD(+) binding site.

It belongs to the glyceraldehyde-3-phosphate dehydrogenase family. Epd subfamily. In terms of assembly, homotetramer.

It localises to the cytoplasm. The catalysed reaction is D-erythrose 4-phosphate + NAD(+) + H2O = 4-phospho-D-erythronate + NADH + 2 H(+). Its pathway is cofactor biosynthesis; pyridoxine 5'-phosphate biosynthesis; pyridoxine 5'-phosphate from D-erythrose 4-phosphate: step 1/5. Its function is as follows. Catalyzes the NAD-dependent conversion of D-erythrose 4-phosphate to 4-phosphoerythronate. The protein is D-erythrose-4-phosphate dehydrogenase of Vibrio parahaemolyticus serotype O3:K6 (strain RIMD 2210633).